The chain runs to 394 residues: MKKVDRWLLPDGIEEVLPEEASRVEGLRRRLVDLFQSWGYDYVIPPMVEFIDSLLTGSGEDAYLDTFKITDQLSGKTMGIRADITPQAARMDAHSLQREGLNRLCYAGHVMYTKPKGPLASRTPIQVGVELFGESGLDADIEVISLLLETLEAAGLPDLYIDIGHVGVYRALIEEAGISKEQEEVYFELLQAKSINSIESWVANNITDAKMAEWLLALPRLAGGNHILAEAKALFEDAPAEVSAAIDELEMIDSVLTERYPHSKRYFDLSELRGYHYYTGVIFGAFAPGLGNAIANGGRYDHVGEAFGRARAATGFAADLMSISRVTGRCELAPSGIYVEDSDADGIWAKIKQLRASGERVVCALAGQTAPYKHQHCNRKLIKQGEEFVVAPIK.

Belongs to the class-II aminoacyl-tRNA synthetase family. HisZ subfamily. In terms of assembly, heteromultimer composed of HisG and HisZ subunits.

It is found in the cytoplasm. It functions in the pathway amino-acid biosynthesis; L-histidine biosynthesis; L-histidine from 5-phospho-alpha-D-ribose 1-diphosphate: step 1/9. Required for the first step of histidine biosynthesis. May allow the feedback regulation of ATP phosphoribosyltransferase activity by histidine. The protein is ATP phosphoribosyltransferase regulatory subunit of Saccharophagus degradans (strain 2-40 / ATCC 43961 / DSM 17024).